A 584-amino-acid chain; its full sequence is Arginine--tRNA ligase (584 aa).

The 'HIGH' region motif lies at 125-135 (PNIAKEMHVGH).

This sequence belongs to the class-I aminoacyl-tRNA synthetase family. In terms of assembly, monomer.

It is found in the cytoplasm. The catalysed reaction is tRNA(Arg) + L-arginine + ATP = L-arginyl-tRNA(Arg) + AMP + diphosphate. The protein is Arginine--tRNA ligase of Thermosynechococcus vestitus (strain NIES-2133 / IAM M-273 / BP-1).